We begin with the raw amino-acid sequence, 206 residues long: MSPTRAQLTRQIIEAGRFLYGRGWSPATSSNYSARLSPGEALLTVSGKHKGQLGEDDVLATDMAGNSLEPGKKPSAETLLHTQLYTWKTEIGAVLHTHSVNATVLSRLILSDSLVFADYELQKAFAGIGTHECQICVPIFDNDQDIARLASRVRPWLDEHPDCVGYLIRGHGLYTWGAAMNDALRQVEAFEFLFDCELKMRALQGR.

Zn(2+)-binding residues include His-96 and His-98.

Belongs to the aldolase class II family. MtnB subfamily. Zn(2+) is required as a cofactor.

The catalysed reaction is 5-(methylsulfanyl)-D-ribulose 1-phosphate = 5-methylsulfanyl-2,3-dioxopentyl phosphate + H2O. It functions in the pathway amino-acid biosynthesis; L-methionine biosynthesis via salvage pathway; L-methionine from S-methyl-5-thio-alpha-D-ribose 1-phosphate: step 2/6. Its function is as follows. Catalyzes the dehydration of methylthioribulose-1-phosphate (MTRu-1-P) into 2,3-diketo-5-methylthiopentyl-1-phosphate (DK-MTP-1-P). The sequence is that of Methylthioribulose-1-phosphate dehydratase from Azotobacter vinelandii (strain DJ / ATCC BAA-1303).